A 716-amino-acid polypeptide reads, in one-letter code: Exocyst complex component 8 (716 aa).

S15 carries the post-translational modification Phosphoserine. The segment covering 110–119 (STGEDTAGAG) has biased composition (low complexity). The segment at 110 to 149 (STGEDTAGAGPRERGAAQAGFLPGPAGVPREGPGTGEEGK) is disordered. Residues 173–273 (YLVYNGDLVE…WLEVLEETKR (101 aa)) form the PH domain. The span at 275–284 (LSDKRRREQE) shows a compositional bias: basic and acidic residues. The interval 275-319 (LSDKRRREQEEAAALRAPPPVTSKGSNPFEDEAEEELATPEAEEE) is disordered. The span at 303 to 319 (FEDEAEEELATPEAEEE) shows a compositional bias: acidic residues. T313 bears the Phosphothreonine mark.

It belongs to the EXO84 family. In terms of assembly, the exocyst complex is composed of EXOC1, EXOC2, EXOC3, EXOC4, EXOC5, EXOC6, EXOC7 and EXOC8. Interacts (via PH domain) with GTP-bound RALA and RALB. Interacts with SH3BP1; required for the localization of both SH3BP1 and the exocyst to the leading edge of migrating cells.

Its subcellular location is the cytoplasm. The protein resides in the perinuclear region. It is found in the cell projection. The protein localises to the growth cone. In terms of biological role, component of the exocyst complex involved in the docking of exocytic vesicles with fusion sites on the plasma membrane. This is Exocyst complex component 8 (Exoc8) from Rattus norvegicus (Rat).